A 632-amino-acid polypeptide reads, in one-letter code: PAN2-PAN3 deadenylation complex subunit PAN3 (632 aa).

2 disordered regions span residues 1-22 (MQPG…PHQL) and 99-127 (PTFG…PPTL). Basic residues predominate over residues 107-116 (MNHRASHHHQ). The segment covering 117–127 (SPQMAQQPPTL) has biased composition (polar residues). Residues 223-494 (KADSAIIGDI…TINEIMPMIG (272 aa)) form a pseudokinase domain region. ATP is bound by residues arginine 270, 321-328 (DYYPLAGT), and 397-398 (NK). Positions 495–533 (GRFFTVMENMQAKTDVLEAELSREMENGRLFRLVAKMNT) form a coiled coil. The tract at residues 534–632 (VLERVEHGTD…LLGTNMMLHR (99 aa)) is knob domain.

It belongs to the protein kinase superfamily. PAN3 family. Homodimer. Forms a heterotrimer with a catalytic subunit PAN2 to form the poly(A)-nuclease (PAN) deadenylation complex. Interacts (via PAM-2 motif) with poly(A)-binding protein (via PABC domain), conferring substrate specificity of the enzyme complex. Interacts with the GW182 family protein ain-1. Highly expressed in germ cells.

It is found in the cytoplasm. The protein localises to the P-body. Regulatory subunit of the poly(A)-nuclease (PAN) deadenylation complex, one of two cytoplasmic mRNA deadenylases involved in general and miRNA-mediated mRNA turnover. PAN specifically shortens poly(A) tails of RNA and the activity is stimulated by poly(A)-binding protein (PABP). PAN deadenylation is followed by rapid degradation of the shortened mRNA tails by the CCR4-NOT complex. Deadenylated mRNAs are then degraded by two alternative mechanisms, namely exosome-mediated 3'-5' exonucleolytic degradation, or deadenylation-dependent mRNA decaping and subsequent 5'-3' exonucleolytic degradation by XRN1. PAN3 acts as a positive regulator for PAN activity, recruiting the catalytic subunit PAN2 to mRNA via its interaction with RNA and PABP, and to miRNA targets via its interaction with GW182 family proteins. Within the PAN complex, may positively regulate fertility. The sequence is that of PAN2-PAN3 deadenylation complex subunit PAN3 from Caenorhabditis elegans.